The chain runs to 392 residues: Na(+)/H(+) antiporter NhaA (392 aa).

Transmembrane regions (helical) follow at residues Ile16–Ala36, Leu58–Val78, Ile93–Leu113, Gly124–Gly144, Ile153–Phe173, Thr176–Met196, Met199–Leu219, Asp257–Val277, Val295–Ile315, Trp328–Val348, and Ala362–Leu382.

The protein belongs to the NhaA Na(+)/H(+) (TC 2.A.33) antiporter family.

The protein resides in the cell inner membrane. The enzyme catalyses Na(+)(in) + 2 H(+)(out) = Na(+)(out) + 2 H(+)(in). In terms of biological role, na(+)/H(+) antiporter that extrudes sodium in exchange for external protons. The protein is Na(+)/H(+) antiporter NhaA of Sulfurovum sp. (strain NBC37-1).